Reading from the N-terminus, the 287-residue chain is Survival motor neuron protein (287 aa).

Residues 1–28 (MGGGGGGFPEPEDSVLFRRGTGESDDSD) form a disordered region. Positions 9 to 40 (PEPEDSVLFRRGTGESDDSDVWDDTALIKAYD) are P1 (binding site for GEMIN2). T21 is modified (phosphothreonine). Residues S24 and S27 each carry the phosphoserine modification. Residue K47 forms a Glycyl lysine isopeptide (Lys-Gly) (interchain with G-Cter in SUMO2) linkage. 2 disordered regions span residues 51–86 (KNGDISEASEKPKGTPKRKSAKNKSQRKNTTSPSKQ) and 149–221 (NAQE…PPPH). Residues 64 to 77 (GTPKRKSAKNKSQR) show a composition bias toward basic residues. Position 65 is a phosphothreonine (T65). T80 carries the post-translational modification Phosphothreonine; by PKA. A Tudor domain is found at 86–146 (QWKVGDNCCA…LSPTSEVANI (61 aa)). The tract at residues 92-204 (NCCAIWSEDG…MPRSGLGPGK (113 aa)) is required for interaction with RPP20/POP7. Residues 149-160 (NAQENENESQIS) show a composition bias toward low complexity. Over residues 167 to 179 (SSRSPLNKPNNIR) the composition is skewed to polar residues. Residue K204 forms a Glycyl lysine isopeptide (Lys-Gly) (interchain with G-Cter in SUMO2) linkage. Residues 211 to 221 (GPPPPPPPPPH) show a composition bias toward pro residues. A P2 (binding site for SM B) region spans residues 234-261 (PPMIPPPPPICPDSLDDADALGSMLISW). Residues 273–287 (GFKQSQKEGRYSHFN) form a required for interaction with SYNCRIP region.

The protein belongs to the SMN family. As to quaternary structure, homooligomer; may form higher order homooligomers in the dimer to octamer range. Part of the core SMN complex that contains SMN1, GEMIN2/SIP1, DDX20/GEMIN3, GEMIN4, GEMIN5, GEMIN6, GEMIN7, GEMIN8 and STRAP/UNRIP. Part of the SMN-Sm complex that contains SMN1, GEMIN2/SIP1, DDX20/GEMIN3, GEMIN4, GEMIN5, GEMIN6, GEMIN7, GEMIN8, STRAP/UNRIP and the Sm proteins SNRPB, SNRPD1, SNRPD2, SNRPD3, SNRPE, SNRPF and SNRPG. Component of an import snRNP complex composed of KPNB1, RNUT1, SMN1 and ZNF259. Interacts with DDX20, FBL, NOLA1, RNUT1, SYNCRIP and with several spliceosomal snRNP core Sm proteins, including SNRPB, SNRPD1, SNRPD2, SNRPD3, SNRPE and ILF3. Interacts with GEMIN2; the interaction is direct. Interacts with GEMIN3; the interaction is direct. Interacts with GEMIN8; the interaction is direct. Interacts with SNRPB; the interaction is direct. Interacts (via Tudor domain) with SNRPD1 (via C-terminus); the interaction is direct. Interacts with SNRPD2; the interaction is direct. Interacts (via Tudor domain) with SNRPD3 (via C-terminus); the interaction is direct. Interacts with SNRPE; the interaction is direct. Interacts with OSTF1, LSM10, LSM11 and RPP20/POP7. Interacts (via C-terminal region) with ZPR1 (via C-terminal region). Interacts (via Tudor domain) with COIL. Interacts with SETX; recruits SETX to POLR2A. Interacts with POLR2A (via the C-terminal domain (CTD)). Interacts with PRMT5. Interacts with XRN2. Interacts (via C-terminus) with FMR1 (via C-terminus); the interaction is direct and occurs in a RNA-independent manner. Interacts (via Tudor domain) with SF3B2 ('Arg-508'-methylated form). Interacts with WRAP53/TCAB1. Interacts (via Tudor domain) with ELAVL4 in an RNA-independent manner; the interaction is required for localization of ELAVL4 to RNA granules. Interacts with FRG1.

It localises to the nucleus. Its subcellular location is the gem. The protein localises to the cajal body. It is found in the cytoplasm. The protein resides in the cytoplasmic granule. It localises to the perikaryon. Its subcellular location is the cell projection. The protein localises to the neuron projection. It is found in the axon. The protein resides in the myofibril. It localises to the sarcomere. Its subcellular location is the z line. Its function is as follows. The SMN complex catalyzes the assembly of small nuclear ribonucleoproteins (snRNPs), the building blocks of the spliceosome, and thereby plays an important role in the splicing of cellular pre-mRNAs. Most spliceosomal snRNPs contain a common set of Sm proteins SNRPB, SNRPD1, SNRPD2, SNRPD3, SNRPE, SNRPF and SNRPG that assemble in a heptameric protein ring on the Sm site of the small nuclear RNA to form the core snRNP (Sm core). In the cytosol, the Sm proteins SNRPD1, SNRPD2, SNRPE, SNRPF and SNRPG are trapped in an inactive 6S pICln-Sm complex by the chaperone CLNS1A that controls the assembly of the core snRNP. To assemble core snRNPs, the SMN complex accepts the trapped 5Sm proteins from CLNS1A forming an intermediate. Binding of snRNA inside 5Sm ultimately triggers eviction of the SMN complex, thereby allowing binding of SNRPD3 and SNRPB to complete assembly of the core snRNP. Within the SMN complex, SMN1 acts as a structural backbone and together with GEMIN2 it gathers the Sm complex subunits. Ensures the correct splicing of U12 intron-containing genes that may be important for normal motor and proprioceptive neurons development. Also required for resolving RNA-DNA hybrids created by RNA polymerase II, that form R-loop in transcription terminal regions, an important step in proper transcription termination. May also play a role in the metabolism of small nucleolar ribonucleoprotein (snoRNPs). The chain is Survival motor neuron protein (SMN1) from Bos taurus (Bovine).